We begin with the raw amino-acid sequence, 351 residues long: Histidine protein kinase SaeS (351 aa).

Transmembrane regions (helical) follow at residues 9–29 (IIIGVVSSILLTSTILAIAYI) and 40–60 (TLTLTTIITSCLTLLICSIFI). The region spanning 61-114 (NPLIQKIKQFNIKTKQFANGNYASNDKTFNSPKEIYELNQSFNKMASEITQQMN) is the HAMP domain. Positions 129 to 348 (NLAHDLKTPL…TMTVTLHKLD (220 aa)) constitute a Histidine kinase domain. His-132 carries the phosphohistidine; by autocatalysis modification.

In terms of processing, autophosphorylated.

The protein localises to the cell membrane. The catalysed reaction is ATP + protein L-histidine = ADP + protein N-phospho-L-histidine.. Its function is as follows. Member of the two-component regulatory system SaeR/SaeS involved in the regulation of staphylococcal virulence factors in a strain-dependent fashion. Probably functions as a membrane-associated protein kinase that upon sensing the appropriate signal, autophosphorylates and in turn activates the cytosolic response regulator SaeR. The polypeptide is Histidine protein kinase SaeS (saeS) (Staphylococcus aureus (strain MRSA252)).